The sequence spans 410 residues: NADH-quinone oxidoreductase subunit H (410 aa).

The next 9 membrane-spanning stretches (helical) occupy residues 16–36, 84–104, 124–144, 165–185, 198–218, 260–280, 288–308, 320–340, and 353–373; these read LILAKSLGVFVFLLLTVLAAI, WIYLAAPVISVIPAFMAFAVI, LPVAVLYILAVTSIGVYGIVL, VISYEIAMALSFVAVFIYAGT, VWFIFLLLPSFLVYLTSMVGE, VSALATTLFLGGWHAPWPISI, WWPLLWFTAKVWLFLFFFMWL, FMRLGWKLLIPVSLAWIAIVA, and WVTALIGVAGVAAILASLLAW. The tract at residues 384–410 is disordered; it reads SHSPPAQSSDHGAFPVPPLPVKEPADA.

This sequence belongs to the complex I subunit 1 family. In terms of assembly, NDH-1 is composed of 14 different subunits. Subunits NuoA, H, J, K, L, M, N constitute the membrane sector of the complex.

It is found in the cell membrane. It carries out the reaction a quinone + NADH + 5 H(+)(in) = a quinol + NAD(+) + 4 H(+)(out). In terms of biological role, NDH-1 shuttles electrons from NADH, via FMN and iron-sulfur (Fe-S) centers, to quinones in the respiratory chain. The immediate electron acceptor for the enzyme in this species is believed to be menaquinone. Couples the redox reaction to proton translocation (for every two electrons transferred, four hydrogen ions are translocated across the cytoplasmic membrane), and thus conserves the redox energy in a proton gradient. The polypeptide is NADH-quinone oxidoreductase subunit H (Mycolicibacterium gilvum (strain PYR-GCK) (Mycobacterium gilvum (strain PYR-GCK))).